The sequence spans 113 residues: MNTVRVTFLLVFVLAVSLGQADKDENRMEMQEKTEQGKSYLDFAENLLLQKLEELEAKLLEEDSEESRNSRQKRCIGEGVPCDENDPRCCSGLVCLKPTLHGIWYKSYYCYRK.

An N-terminal signal peptide occupies residues 1-21 (MNTVRVTFLLVFVLAVSLGQA). Positions 22-74 (DKDENRMEMQEKTEQGKSYLDFAENLLLQKLEELEAKLLEEDSEESRNSRQKR) are excised as a propeptide. Residues 61–83 (EEDSEESRNSRQKRCIGEGVPCD) are disordered. Intrachain disulfides connect Cys-75/Cys-90, Cys-82/Cys-95, and Cys-89/Cys-110.

This sequence belongs to the neurotoxin 14 (magi-1) family. 01 (HNTX-16) subfamily. In terms of tissue distribution, expressed by the venom gland.

It localises to the secreted. In terms of biological role, probable ion channel inhibitor. In Cyriopagopus hainanus (Chinese bird spider), this protein is U11-theraphotoxin-Hhn1f.